We begin with the raw amino-acid sequence, 389 residues long: PqqA peptide cyclase (389 aa).

A Radical SAM core domain is found at 19 to 234 (VGLPLWLLAE…TNEYRARLEA (216 aa)). Residues Cys-33, Cys-37, and Cys-40 each contribute to the [4Fe-4S] cluster site.

The protein belongs to the radical SAM superfamily. PqqE family. Interacts with PqqD. The interaction is necessary for activity of PqqE. The cofactor is [4Fe-4S] cluster.

The catalysed reaction is [PQQ precursor protein] + S-adenosyl-L-methionine = E-Y cross-linked-[PQQ precursor protein] + 5'-deoxyadenosine + L-methionine + H(+). It functions in the pathway cofactor biosynthesis; pyrroloquinoline quinone biosynthesis. Its function is as follows. Catalyzes the cross-linking of a glutamate residue and a tyrosine residue in the PqqA protein as part of the biosynthesis of pyrroloquinoline quinone (PQQ). This is PqqA peptide cyclase from Pseudomonas syringae pv. syringae (strain B728a).